The chain runs to 432 residues: ATP-dependent RNA helicase RhlB (432 aa).

Positions 9–37 (QNFADLGLQPQVIDGLNAKGFIKCTPIQA) match the Q motif motif. Residues 40-219 (LPVLLAGQDI…FEHMQEPEHV (180 aa)) form the Helicase ATP-binding domain. 53-60 (AQTGTGKT) contacts ATP. A DEAD box motif is present at residues 165 to 168 (DEAD). In terms of domain architecture, Helicase C-terminal spans 245-390 (ALLQTLIEEE…QSDYDASALL (146 aa)). Residues 396 to 432 (PLRLQRRPQQNRRNNNGQRQGGNRKHTRPRQPRNTQS) form a disordered region. Positions 417–426 (GNRKHTRPRQ) are enriched in basic residues.

Belongs to the DEAD box helicase family. RhlB subfamily. In terms of assembly, component of the RNA degradosome, which is a multiprotein complex involved in RNA processing and mRNA degradation.

It is found in the cytoplasm. The catalysed reaction is ATP + H2O = ADP + phosphate + H(+). In terms of biological role, DEAD-box RNA helicase involved in RNA degradation. Has RNA-dependent ATPase activity and unwinds double-stranded RNA. The polypeptide is ATP-dependent RNA helicase RhlB (Aliivibrio fischeri (strain ATCC 700601 / ES114) (Vibrio fischeri)).